Here is a 1909-residue protein sequence, read N- to C-terminus: Nck-associated protein 5 (1909 aa).

The stretch at 71-253 forms a coiled coil; sequence EKLIHELEEE…DLEQQNRTLS (183 aa). Disordered regions lie at residues 351-370, 736-819, 855-997, 1026-1469, 1486-1509, 1541-1592, 1725-1750, and 1763-1885; these read SSYT…SQNW, EEDT…LMEP, PLFE…KKPS, SSSF…APLS, KGQV…FASW, GFGN…RTPQ, FPLP…DAEP, and SMRA…DYGD. The span at 736–748 shows a compositional bias: basic and acidic residues; sequence EEDTEKNIPKDNV. Polar residues-rich tracts occupy residues 753-789, 950-965, 981-990, and 1066-1084; these read RVST…SRSS, APSS…SETA, VISSNPATTE, and PRIS…SKSV. Low complexity-rich tracts occupy residues 1110–1131 and 1178–1187; these read SPSS…HNSP and ASKSSVAVNK. Residues 1241–1250 are compositionally biased toward basic and acidic residues; sequence DGRDGVDNRS. Residues 1300–1325 are compositionally biased toward polar residues; it reads QIITNTAERGNSLTRQNSSTESSPNK. A compositionally biased stretch (low complexity) spans 1339 to 1366; it reads GRPSGHPSSGKGSLGSSGSFSSQHGSPS. The span at 1428–1446 shows a compositional bias: polar residues; sequence PGRTQHPSTFETSSTSKLE. A compositionally biased stretch (low complexity) spans 1454 to 1466; sequence ASATATDAVSSEA. Composition is skewed to basic and acidic residues over residues 1547–1560 and 1567–1576; these read LKSE…KPEL and ELIKDTKSAD. Residues 1869–1878 show a composition bias toward polar residues; it reads YSASGGSNSD.

As to quaternary structure, interacts with the SH3-containing region of the adapter protein NCK. As to expression, expressed in fetal and adult brain, leukocytes and fetal fibroblasts.

This chain is Nck-associated protein 5 (NCKAP5), found in Homo sapiens (Human).